The primary structure comprises 342 residues: tRNA N6-adenosine threonylcarbamoyltransferase (342 aa).

The Fe cation site is built by H111 and H115. Substrate contacts are provided by residues 134 to 138 (LVSGG), D167, G180, and N277. D305 provides a ligand contact to Fe cation.

The protein belongs to the KAE1 / TsaD family. Requires Fe(2+) as cofactor.

Its subcellular location is the cytoplasm. It catalyses the reaction L-threonylcarbamoyladenylate + adenosine(37) in tRNA = N(6)-L-threonylcarbamoyladenosine(37) in tRNA + AMP + H(+). In terms of biological role, required for the formation of a threonylcarbamoyl group on adenosine at position 37 (t(6)A37) in tRNAs that read codons beginning with adenine. Is involved in the transfer of the threonylcarbamoyl moiety of threonylcarbamoyl-AMP (TC-AMP) to the N6 group of A37, together with TsaE and TsaB. TsaD likely plays a direct catalytic role in this reaction. The polypeptide is tRNA N6-adenosine threonylcarbamoyltransferase (Histophilus somni (strain 2336) (Haemophilus somnus)).